We begin with the raw amino-acid sequence, 67 residues long: UPF0337 protein CC_0938 (67 aa).

Positions 37–67 (AAQKAKGDLQNKVGKAQDKARRRDQALNARL) are disordered. The span at 41–61 (AKGDLQNKVGKAQDKARRRDQ) shows a compositional bias: basic and acidic residues.

This sequence belongs to the UPF0337 (CsbD) family.

This chain is UPF0337 protein CC_0938, found in Caulobacter vibrioides (strain ATCC 19089 / CIP 103742 / CB 15) (Caulobacter crescentus).